Here is a 182-residue protein sequence, read N- to C-terminus: Large ribosomal subunit protein uL6 (182 aa).

This sequence belongs to the universal ribosomal protein uL6 family. As to quaternary structure, part of the 50S ribosomal subunit.

Its function is as follows. This protein binds to the 23S rRNA, and is important in its secondary structure. It is located near the subunit interface in the base of the L7/L12 stalk, and near the tRNA binding site of the peptidyltransferase center. The chain is Large ribosomal subunit protein uL6 from Caldicellulosiruptor bescii (strain ATCC BAA-1888 / DSM 6725 / KCTC 15123 / Z-1320) (Anaerocellum thermophilum).